Consider the following 605-residue polypeptide: Aspartate--tRNA(Asp/Asn) ligase (605 aa).

Glu-183 contributes to the L-aspartate binding site. The segment at Gln-207–Lys-210 is aspartate. L-aspartate is bound at residue Arg-229. ATP contacts are provided by residues Arg-229–Glu-231 and Gln-238. His-456 is an L-aspartate binding site. Glu-490 lines the ATP pocket. Residue Arg-497 participates in L-aspartate binding. Gly-542–Arg-545 is a binding site for ATP.

It belongs to the class-II aminoacyl-tRNA synthetase family. Type 1 subfamily. In terms of assembly, homodimer.

Its subcellular location is the cytoplasm. It catalyses the reaction tRNA(Asx) + L-aspartate + ATP = L-aspartyl-tRNA(Asx) + AMP + diphosphate. In terms of biological role, aspartyl-tRNA synthetase with relaxed tRNA specificity since it is able to aspartylate not only its cognate tRNA(Asp) but also tRNA(Asn). Reaction proceeds in two steps: L-aspartate is first activated by ATP to form Asp-AMP and then transferred to the acceptor end of tRNA(Asp/Asn). This Heliobacterium modesticaldum (strain ATCC 51547 / Ice1) protein is Aspartate--tRNA(Asp/Asn) ligase.